The chain runs to 397 residues: MLRGPWRQLWLFFLLLLPGAPEPRGASRPWEGTDEPGSAWAWPGFQRLQEQLRAAGALSKRYWTLFSCQVWPDDCDEDEEAATGPLGWRLPLLGQRYLDLLTTWYCSFKDCCPRGDCRISNNFTGLEWDLNVRLHGQHLVQQLVLRTVRGYLETPQPEKALALSFHGWSGTGKNFVARMLVENLYRDGLMSDCVRMFIATFHFPHPKYVDLYKEQLMSQIRETQQLCHQTLFIFDEAEKLHPGLLEVLGPHLERRAPEGHRAESPWTIFLFLSNLRGDIINEVVLKLLKAGWSREEITMEHLEPHLQAEIVETIDNGFGHSRLVKENLIDYFIPFLPLEYRHVRLCARDAFLSQELLYKEETLDEIAQMMVYVPKEEQLFSSQGCKSISQRINYFLS.

The first 25 residues, 1 to 25 (MLRGPWRQLWLFFLLLLPGAPEPRG), serve as a signal peptide directing secretion. Asn-122 is a glycosylation site (N-linked (GlcNAc...) asparagine). Residue 167-174 (GWSGTGKN) participates in ATP binding.

It belongs to the ClpA/ClpB family. Torsin subfamily. As to quaternary structure, may not form homohexamers. N-glycosylated. Ubiquitously expressed. Highest expression in stomach, salivary glands and lymph nodes. Isoform 2 is expressed in placenta.

It localises to the cytoplasm. The protein localises to the endoplasmic reticulum lumen. In Homo sapiens (Human), this protein is Torsin-3A (TOR3A).